Reading from the N-terminus, the 273-residue chain is Shikimate dehydrogenase (NADP(+)) (273 aa).

Shikimate is bound by residues 18-20 (SKS) and T65. K69 functions as the Proton acceptor in the catalytic mechanism. E81 lines the NADP(+) pocket. Shikimate-binding residues include N90 and D105. Residues 130-134 (GAGGA), 154-159 (NRTHSK), and M217 contribute to the NADP(+) site. Position 219 (Y219) interacts with shikimate. G240 is a binding site for NADP(+).

Belongs to the shikimate dehydrogenase family. In terms of assembly, homodimer.

The catalysed reaction is shikimate + NADP(+) = 3-dehydroshikimate + NADPH + H(+). It participates in metabolic intermediate biosynthesis; chorismate biosynthesis; chorismate from D-erythrose 4-phosphate and phosphoenolpyruvate: step 4/7. In terms of biological role, involved in the biosynthesis of the chorismate, which leads to the biosynthesis of aromatic amino acids. Catalyzes the reversible NADPH linked reduction of 3-dehydroshikimate (DHSA) to yield shikimate (SA). This Herminiimonas arsenicoxydans protein is Shikimate dehydrogenase (NADP(+)).